We begin with the raw amino-acid sequence, 80 residues long: NAD(P)H-quinone oxidoreductase subunit O (80 aa).

It belongs to the complex I NdhO subunit family. NDH-1 can be composed of about 15 different subunits; different subcomplexes with different compositions have been identified which probably have different functions.

Its subcellular location is the cellular thylakoid membrane. The enzyme catalyses a plastoquinone + NADH + (n+1) H(+)(in) = a plastoquinol + NAD(+) + n H(+)(out). It carries out the reaction a plastoquinone + NADPH + (n+1) H(+)(in) = a plastoquinol + NADP(+) + n H(+)(out). NDH-1 shuttles electrons from an unknown electron donor, via FMN and iron-sulfur (Fe-S) centers, to quinones in the respiratory and/or the photosynthetic chain. The immediate electron acceptor for the enzyme in this species is believed to be plastoquinone. Couples the redox reaction to proton translocation, and thus conserves the redox energy in a proton gradient. Cyanobacterial NDH-1 also plays a role in inorganic carbon-concentration. This Prochlorococcus marinus subsp. pastoris (strain CCMP1986 / NIES-2087 / MED4) protein is NAD(P)H-quinone oxidoreductase subunit O.